The primary structure comprises 356 residues: S-adenosylmethionine:tRNA ribosyltransferase-isomerase (356 aa).

The protein belongs to the QueA family. Monomer.

Its subcellular location is the cytoplasm. The catalysed reaction is 7-aminomethyl-7-carbaguanosine(34) in tRNA + S-adenosyl-L-methionine = epoxyqueuosine(34) in tRNA + adenine + L-methionine + 2 H(+). It participates in tRNA modification; tRNA-queuosine biosynthesis. Its function is as follows. Transfers and isomerizes the ribose moiety from AdoMet to the 7-aminomethyl group of 7-deazaguanine (preQ1-tRNA) to give epoxyqueuosine (oQ-tRNA). The chain is S-adenosylmethionine:tRNA ribosyltransferase-isomerase from Escherichia coli O6:H1 (strain CFT073 / ATCC 700928 / UPEC).